We begin with the raw amino-acid sequence, 263 residues long: Methylesterase 18 (263 aa).

Catalysis depends on Ser80, which acts as the Acyl-ester intermediate. Residues Asp212 and His240 each act as charge relay system in the active site.

Belongs to the AB hydrolase superfamily. Methylesterase family.

The catalysed reaction is methyl (indol-3-yl)acetate + H2O = (indol-3-yl)acetate + methanol + H(+). It functions in the pathway plant hormone biosynthesis. In terms of biological role, methylesterase shown to have methyl indole-3-acetic acid (MeIAA) esterase activity in vitro. In Arabidopsis thaliana (Mouse-ear cress), this protein is Methylesterase 18.